Here is a 217-residue protein sequence, read N- to C-terminus: 3,4-dihydroxy-2-butanone 4-phosphate synthase (217 aa).

Residues 37 to 38 (RE), aspartate 42, 150 to 154 (RGGHT), and glutamate 174 contribute to the D-ribulose 5-phosphate site. Glutamate 38 provides a ligand contact to Mg(2+). A Mg(2+)-binding site is contributed by histidine 153.

It belongs to the DHBP synthase family. As to quaternary structure, homodimer. It depends on Mg(2+) as a cofactor. Mn(2+) serves as cofactor.

It carries out the reaction D-ribulose 5-phosphate = (2S)-2-hydroxy-3-oxobutyl phosphate + formate + H(+). It participates in cofactor biosynthesis; riboflavin biosynthesis; 2-hydroxy-3-oxobutyl phosphate from D-ribulose 5-phosphate: step 1/1. Functionally, catalyzes the conversion of D-ribulose 5-phosphate to formate and 3,4-dihydroxy-2-butanone 4-phosphate. This Pectobacterium atrosepticum (strain SCRI 1043 / ATCC BAA-672) (Erwinia carotovora subsp. atroseptica) protein is 3,4-dihydroxy-2-butanone 4-phosphate synthase.